Consider the following 299-residue polypeptide: Ribosomal RNA small subunit methyltransferase H (299 aa).

S-adenosyl-L-methionine is bound by residues 36–38 (GGH), Asp-55, Asp-103, and Gln-110. Basic and acidic residues-rich tracts occupy residues 268–282 (KPVR…ENPR) and 289–299 (RAAERIEKGGD). The tract at residues 268–299 (KPVRPSEEEIRENPRARSGRLRAAERIEKGGD) is disordered.

It belongs to the methyltransferase superfamily. RsmH family.

Its subcellular location is the cytoplasm. It carries out the reaction cytidine(1402) in 16S rRNA + S-adenosyl-L-methionine = N(4)-methylcytidine(1402) in 16S rRNA + S-adenosyl-L-homocysteine + H(+). Functionally, specifically methylates the N4 position of cytidine in position 1402 (C1402) of 16S rRNA. The chain is Ribosomal RNA small subunit methyltransferase H from Thermotoga petrophila (strain ATCC BAA-488 / DSM 13995 / JCM 10881 / RKU-1).